Reading from the N-terminus, the 380-residue chain is Cytochrome b (380 aa).

The next 4 membrane-spanning stretches (helical) occupy residues 34 to 54 (FGSL…FLAM), 78 to 99 (WLLR…YMHI), 114 to 134 (WNIG…GYVL), and 179 to 199 (FFAF…VHLL). The heme b site is built by His84 and His98. Positions 183 and 197 each coordinate heme b. His202 lines the a ubiquinone pocket. The next 4 membrane-spanning stretches (helical) occupy residues 227–247 (YKDV…ALFS), 289–309 (LGGV…PFVH), 321–341 (LAQV…WLGG), and 348–368 (YIFL…LLIP).

The protein belongs to the cytochrome b family. As to quaternary structure, the cytochrome bc1 complex contains 3 respiratory subunits (MT-CYB, CYC1 and UQCRFS1), 2 core proteins (UQCRC1 and UQCRC2) and probably 6 low-molecular weight proteins. The cofactor is heme b.

Its subcellular location is the mitochondrion inner membrane. Functionally, component of the ubiquinol-cytochrome c reductase complex (complex III or cytochrome b-c1 complex) that is part of the mitochondrial respiratory chain. The b-c1 complex mediates electron transfer from ubiquinol to cytochrome c. Contributes to the generation of a proton gradient across the mitochondrial membrane that is then used for ATP synthesis. The sequence is that of Cytochrome b (MT-CYB) from Branchiostoma floridae (Florida lancelet).